A 449-amino-acid polypeptide reads, in one-letter code: Probable hexaprenyl pyrophosphate synthase, mitochondrial (449 aa).

3 residues coordinate isopentenyl diphosphate: K122, R125, and H200. Mg(2+)-binding residues include D207 and D211. R216 provides a ligand contact to an all-trans-polyprenyl diphosphate. R217 contacts isopentenyl diphosphate. Residues K300, T301, Q338, and K355 each contribute to the an all-trans-polyprenyl diphosphate site.

This sequence belongs to the FPP/GGPP synthase family. Mg(2+) is required as a cofactor.

It localises to the mitochondrion. Its pathway is cofactor biosynthesis; ubiquinone biosynthesis. Its function is as follows. Assembly of polyisoprenoid side chains. The polyprenyl synthase of coenzyme Q biosynthesis catalyzes the formation from isopentenyl diphosphate of all trans-polyprenyl pyrophosphates generally ranging in length of between 6 and 10 isoprene units depending on the species. In Neurospora crassa (strain ATCC 24698 / 74-OR23-1A / CBS 708.71 / DSM 1257 / FGSC 987), this protein is Probable hexaprenyl pyrophosphate synthase, mitochondrial.